Here is a 71-residue protein sequence, read N- to C-terminus: MAVEKTNSSSSLAEVIDRILDKGIVIDAWARVSLVGIELLAIEARVVIASVETYLKYAEAVGLTQXAXXAX.

The segment at 12–22 is alpha helix 1; sequence LAEVIDRILDK. The segment at 26–34 is beta-strand 1; it reads IDAWARVSL. A beta turn region spans residues 35–37; that stretch reads VGI. Residues 38-46 are beta-strand 2; it reads ELLAIEARV. The alpha helix 2 stretch occupies residues 51–70; the sequence is VETYLKYAEAVGLTQXAXXA.

This sequence belongs to the gas vesicle GvpA family. In terms of assembly, the gas vesicle shell is 2 nm thick and consists of a single layer of this protein. It forms helical ribs nearly perpendicular to the long axis of the vesicle.

Its subcellular location is the gas vesicle shell. Gas vesicles are hollow, gas filled proteinaceous nanostructures found in some microorganisms. During planktonic growth they allow positioning of the organism at a favorable depth for light or nutrient acquisition. GvpA forms the protein shell. The sequence is that of Gas vesicle protein A from Microcystis sp. (strain BC 84/1).